A 339-amino-acid polypeptide reads, in one-letter code: Anthranilate phosphoribosyltransferase (339 aa).

Residues G79, 82-83 (GD), T87, 89-92 (NVST), 107-115 (KHGNRAVSS), and S119 contribute to the 5-phospho-alpha-D-ribose 1-diphosphate site. An anthranilate-binding site is contributed by G79. S91 is a Mg(2+) binding site. N110 serves as a coordination point for anthranilate. R165 provides a ligand contact to anthranilate. Mg(2+)-binding residues include D224 and E225.

Belongs to the anthranilate phosphoribosyltransferase family. As to quaternary structure, homodimer. Mg(2+) serves as cofactor.

It catalyses the reaction N-(5-phospho-beta-D-ribosyl)anthranilate + diphosphate = 5-phospho-alpha-D-ribose 1-diphosphate + anthranilate. Its pathway is amino-acid biosynthesis; L-tryptophan biosynthesis; L-tryptophan from chorismate: step 2/5. Functionally, catalyzes the transfer of the phosphoribosyl group of 5-phosphorylribose-1-pyrophosphate (PRPP) to anthranilate to yield N-(5'-phosphoribosyl)-anthranilate (PRA). The polypeptide is Anthranilate phosphoribosyltransferase (Geobacillus kaustophilus (strain HTA426)).